A 282-amino-acid chain; its full sequence is S-formylglutathione hydrolase (282 aa).

Ala-2 is subject to N-acetylalanine. Position 4 is an N6-succinyllysine (Lys-4). Ser-149 acts as the Charge relay system in catalysis. Position 200 is an N6-acetyllysine (Lys-200). Active-site charge relay system residues include Asp-226 and His-260.

This sequence belongs to the esterase D family. As to quaternary structure, homodimer.

It is found in the cytoplasm. The protein localises to the cytoplasmic vesicle. It catalyses the reaction S-formylglutathione + H2O = formate + glutathione + H(+). In terms of biological role, serine hydrolase involved in the detoxification of formaldehyde. This is S-formylglutathione hydrolase (Esd) from Mus musculus (Mouse).